A 205-amino-acid chain; its full sequence is Colicin-E8 (205 aa).

Disordered regions lie at residues 24–109 and 136–187; these read AQTD…PDRI and PELS…VYDM. Composition is skewed to basic and acidic residues over residues 53–76, 88–99, and 159–178; these read QERR…ESKR, PVGDKWLDDAGK, and RNKD…DKPI. Positions 173, 198, and 202 each coordinate Zn(2+).

The protein belongs to the colicin/pyosin nuclease family.

This plasmid-coded bactericidal protein is an endonuclease active on both single- and double-stranded DNA but with undefined specificity. Its function is as follows. Colicins are polypeptide toxins produced by and active against E.coli and closely related bacteria. The protein is Colicin-E8 (col) of Escherichia coli.